The sequence spans 435 residues: 5-methylthioadenosine/S-adenosylhomocysteine deaminase (435 aa).

Zn(2+) is bound by residues His65 and His67. Residues Glu94, Arg150, and His189 each contribute to the substrate site. Residue His216 coordinates Zn(2+). Glu219 and Asp304 together coordinate substrate. Asp304 is a binding site for Zn(2+).

This sequence belongs to the metallo-dependent hydrolases superfamily. MTA/SAH deaminase family. Requires Zn(2+) as cofactor.

It carries out the reaction S-adenosyl-L-homocysteine + H2O + H(+) = S-inosyl-L-homocysteine + NH4(+). The catalysed reaction is S-methyl-5'-thioadenosine + H2O + H(+) = S-methyl-5'-thioinosine + NH4(+). Its function is as follows. Catalyzes the deamination of 5-methylthioadenosine and S-adenosyl-L-homocysteine into 5-methylthioinosine and S-inosyl-L-homocysteine, respectively. Is also able to deaminate adenosine. The polypeptide is 5-methylthioadenosine/S-adenosylhomocysteine deaminase (Bacillus cereus (strain ZK / E33L)).